We begin with the raw amino-acid sequence, 61 residues long: MFHLVDFQVTIAEILLIIMRTFKVSIWNLDYIINLIIKNLSKSLTENKYSQLDEEQPMEID.

The segment at 18–24 (IMRTFKV) is important for host Golgi localization.

It belongs to the coronaviruses accessory protein 6 family. Interacts (via C-terminus) with host RAE1 in the NUP98-RAE1 complex; this interaction disrupts the host nuclear import. Interacts with host KPNA2; this interaction may inhibit IFN-beta production by blocking IRF3 nuclear translocation.

It is found in the host endoplasmic reticulum membrane. The protein localises to the host Golgi apparatus membrane. Functionally, disrupts bidirectional nucleocytoplasmic transport by interacting with the host RAE1-NUP98 complex. Disrupts cell nuclear import complex formation by tethering karyopherin alpha 2 and karyopherin beta 1 to the membrane. Retention of import factors at the ER/Golgi membrane leads to a loss of transport into the nucleus. Prevents STAT1 nuclear translocation in response to interferon signaling, thus blocking the expression of interferon stimulated genes (ISGs) that display multiple antiviral activities. Suppresses IFN-beta production possibly by blocking IRF3 nuclear translocation. Might induce accumulation of host HNRNPA1. Its function is as follows. May play a role in viral double membrane vesicles networks to enhance viral replication. This is ORF6 protein from Homo sapiens (Human).